The following is a 1336-amino-acid chain: Mating factor M secretion protein mam1 (1336 aa).

The segment at 1–29 (MHIHSDLSLPQFEHASIDPPSYSPQKSSF) is disordered. Over 1–91 (MHIHSDLSLP…ELAGVSSWSD (91 aa)) the chain is Cytoplasmic. A helical transmembrane segment spans residues 92–112 (FFYLFHFSDIPLIFGTLIFTC). The 293-residue stretch at 104-396 (IFGTLIFTCL…ILPAIPDLIK (293 aa)) folds into the ABC transmembrane type-1 1 domain. The Extracellular segment spans residues 113 to 153 (LSAALEPLMTWTTGKVFDALSQYATSQITLGKMISLINFNS). Residues 154-174 (LLITIFGLASCVFSFGVRFLW) traverse the membrane as a helical segment. Residues 175–250 (QYLSAIAGKR…SCLIISFRYS (76 aa)) are Cytoplasmic-facing. Residues 251-271 (WSLTLVVLASYPIIILVVGFI) traverse the membrane as a helical segment. Residues 272–778 (NSFLSSAYEK…KSIWKVKKLR (507 aa)) lie on the Extracellular side of the membrane. The ABC transporter 1 domain occupies 433 to 668 (FRFDNVSFAY…EDFENNVSID (236 aa)). 2 N-linked (GlcNAc...) asparagine glycosylation sites follow: Asn437 and Asn454. 469 to 476 (GPSGSGKS) is a binding site for ATP. 3 N-linked (GlcNAc...) asparagine glycosylation sites follow: Asn536, Asn664, and Asn697. A helical transmembrane segment spans residues 779–799 (WFFLLGLLTSLIQGASVPIFA). One can recognise an ABC transmembrane type-1 2 domain in the interval 781–1066 (FLLGLLTSLI…CIMSLPNVSA (286 aa)). Over 800-897 (YVISKCLNLF…ISDMRNMISS (98 aa)) the chain is Cytoplasmic. Residues 898-918 (LIEEVFIAFTMAIIGIAWSFA) form a helical membrane-spanning segment. Residues 919–1336 (TGWRLAAVLV…KLIHRGEWIE (418 aa)) lie on the Extracellular side of the membrane. Asn1011, Asn1063, and Asn1120 each carry an N-linked (GlcNAc...) asparagine glycan. The ABC transporter 2 domain maps to 1099–1331 (IEFDGVSFAY…HTHFWKLIHR (233 aa)). 1135 to 1142 (GISGSGKS) serves as a coordination point for ATP. N-linked (GlcNAc...) asparagine glycosylation is found at Asn1235 and Asn1280.

It belongs to the ABC transporter superfamily. Alpha-factor sex pheromone exporter (TC 3.A.1.206) family.

Its subcellular location is the membrane. Its function is as follows. Required in S.pombe M (minus) cells for production of M-factor pheromone. Involved in the transport of the farnesyl-derivation of the M-factor pheromone. The polypeptide is Mating factor M secretion protein mam1 (mam1) (Schizosaccharomyces pombe (strain 972 / ATCC 24843) (Fission yeast)).